Consider the following 265-residue polypeptide: Eukaryotic translation initiation factor 3 subunit J (265 aa).

Composition is skewed to acidic residues over residues 1 to 12 (MAPERWDDEEDS) and 26 to 44 (DEEEDEVLDSWDAAEDSEV). 2 disordered regions span residues 1–113 (MAPE…DADL) and 212–265 (TMSN…DDFM). Composition is skewed to basic and acidic residues over residues 45–65 (EREKAAKAAEAKAKADAEAAA) and 73–86 (RIQEHKEERKKKAE). A coiled-coil region spans residues 61–95 (AEAAAKKKSKSQRIQEHKEERKKKAEEEDSDSEEE). A compositionally biased stretch (acidic residues) spans 87–97 (EEDSDSEEEDD). The span at 216–228 (EKMREERAADKGS) shows a compositional bias: basic and acidic residues. Residues 251–265 (DYDNGDDGLGDDDFM) are compositionally biased toward acidic residues.

This sequence belongs to the eIF-3 subunit J family. As to quaternary structure, component of the eukaryotic translation initiation factor 3 (eIF-3) complex.

The protein localises to the cytoplasm. Component of the eukaryotic translation initiation factor 3 (eIF-3) complex, which is involved in protein synthesis of a specialized repertoire of mRNAs and, together with other initiation factors, stimulates binding of mRNA and methionyl-tRNAi to the 40S ribosome. The eIF-3 complex specifically targets and initiates translation of a subset of mRNAs involved in cell proliferation. This chain is Eukaryotic translation initiation factor 3 subunit J (hcr1), found in Aspergillus oryzae (strain ATCC 42149 / RIB 40) (Yellow koji mold).